Consider the following 723-residue polypeptide: Nucleolar protein 11 (723 aa).

It localises to the nucleus. It is found in the nucleolus. Functionally, ribosome biogenesis factor. May be required for both optimal rDNA transcription and pre-rRNA processing. This is Nucleolar protein 11 (NOL11) from Gallus gallus (Chicken).